Reading from the N-terminus, the 3075-residue chain is MYVGRIGATTYISRPADSRATPKVIKTQGSITTSNLTSLTTMAQSTYPNEPIVVVGSGCRFPGGANTPSKLWELLREPRDVRSKIPKERFDVDAFYHPDGKHHGRTNAPYAYMLQEDLRAFDGPFFNIQAGEAESMDPQQRLLLETVYEAVSDAGMRIQDLQGSSTAVYVGMMTHDYETVSTRDLESIPTYSATGVAVSVASNRISYFFDWHGPSMTIDTACSSSLVAVHLAVQQLRSGQSSMAIAAGANMILGPMTFVLESKLNMLSPSGRSRMWDAGADGYARGEAVCSVVLKTLSQALRDGDSIECVIRETGVNQDGRTTGITMPNHSAQEALIRATYSKAGLDITNPEDRCQFFEAHGTGTPAGDPQEAEAIATAFFGHKKEASDAENAETPLFVGSVKTVVGHTEGTAGLAGLMKASFAVQHGVIPPNLLFENISPRVAPFYSNLKIATETTPWPTIKPGQPRRVSVNSFGFGGTNAHAIIEEYIKSDQKVPASRQPVEYSDSPSTLNLPLVLSAKSQRSMKTTLESMVQFLQSNPEVNLRDLSWTLLRKRSILPFRRAIVGHSHEAIRAALEAAIEDGIVVSDFSADVKGKPSVLGVFTGQGAQWPGMLKELIVGSSYVRSIAEELDHSLQTLPEKYRPSWTILEQLMLEDEASNVRHASFSQPLCCAVQIVLVRLLKAAGIQFAAVVGHSSGEIACAFATGLISASLAIRIAHLRGVVSAEHAASASGGRGSMLAAGMSYEEAKELCELDAFESRICVAASNSPDSVTFSGDADAIEHLQGVLEDEATFARLLRVDTAYHSHHMLPCAAPYMQALEECGCAVADGDGQVEEGSWYSSVKDSNEPMGLADVTAEYWKDNLVSPVLFSQAVQRAAIMHRPLDVGIEVGCHPALKGPCLATIKDALSDVDLAYTGCLERGKNDMNAFSQALAYLWEQFGIPSLDADRFISTIAPERSCVSLSKQLPTYSWDHSRSYWTESRATRQHLRGPKPHLLLGKLSEYSTPLTFQWLNFVRPRDIEWLDGHALQGQVVFPAAGYIVMAMEAAMEIANSHQVQVQLLEILDMSIDKAVVFDDEDSLVELNLTAEVTSGIGKGDRMILSFIIDSCLSREGDLSTSAKGQLVVTLDEGHLQVTPDNEKQLLPPPEEEHPHMNRVNINSFYHELDLMGYDYSKDFRRLHSMRRADARASGILEFIPLNDEVHGRPLLLHPAPLDIAFQTVIGAYSSPGDRRLRCLYVPTHIDRIALVPSLCLATAASGCDKIAFNTINTYDKGDFLSGDIVAFDAEQTSLFHVENIVFKPFSPPTASTDHPIFAKWSWGPLTPETLLDNPNHWATAQDKEAIPIIERIVYFYIKLFLQQLTREDREQAAFHLQRQIVWCEQVVADAHEGRHQWYDAAWENDTEAQIEQLCARSSYHPHVRLVQRVGQNLLATIRSNGNPFDLMDHDGLLTEFYTNTLSFGPALHYAQDLVGQIAHRYQSMDILEIGAGTGGATKYVLATPQLGFNSYTYTDISTGFFEKAREQFAAFEDRMEFEPLDIRRSPAEQGFTEHVYDLIIASNVLHATPDLEKTMAHARSLLKPGGQMVILEITHRNHTRLGFIFGLFADWWAGIDDGRTMEPFVSFDRWDEILKHVGFSGIDSRTKDRDADLFPTSVFSTHAVNSTIDYLHKPLDAPVKDSYPPLVVVGGQTPKTQRILDEIKAVMPNRQIQLHQRLVDLLDAEDMQAKFTFVVLTELDEELFAGLTEDSFEAVKLLLMYAGNMLWLTENAWVKRPHQASTIGMLRSIRREHPDIGVHIMDVDSAENLDAHFLVEQVLRLEEDIDELAATTTWTQEPEVFWCNGRAWIPRLKHDKSRNNRMNSSRRQIFETLNPSKIPVALKKAAASSSYYLESAETWPVPGAVTAGDRKTVHVRLSHPHALRVGHLGFFYLVQGHVLKGDQALPVVALAERNASIVHVRSDYVHVLEDTAVSANNGSFILAAAAAVLAETVIHSAKSLGADASVLVLNAPGFCAQTLLRAARDSGLRVHLATTSSSTDPSPGADRCVRLHPRDTDRRLKQLLPRGTQAFFDLSTDPSSEGLTQRLPNVLIPSCVRHSTEYLLRDTASAGGKATLPAAYWERVASLANHSLSTHFKENDNASNGCQVLSCTDIVARNNKSRLNASTVISWPDDAALPARIRPIDTETLFAAEKTYLLVGLTGDLGRSLGRWMVLHGARRIVLTSRNPQVSPNWVAHVEELGGQVTVLSMDVTSEDSVDSGLAKLQDLKLPPIGGIAFGPLVLQDVMLKNMDLQMMEMVLKPKVEGARILHEKFSDPASSNPLDFFVMFSSIVAVMGNPGQANYSAANCYLQALAQRRCASGLAASTIDIGAVYGVGFVTRAELEEDFNAIRFMFDSVEEHELHSLFAEAVVSGRRAMHQQQQFKTVLDMADIELTTGIPPLDPTLKDRITFFDDARVGNFKIPERRGKAGDNAAGSKGSVKEQLLQATSLDQVRQIVIDGLSEKLRVTLQIPDGESVHPTIPLIDQGVDSLGAVTVGTWFSKQLYLDLPLLRVLGGASVADLADDAAARLPPSSIPLVAASEGGAETSDNDTSGPEGTDLSASTTITEPSSADEEDEKQEDDNDNSVLALHPLSLGQEYAWRLQKAADDSTIFNNTIGMFMTGSIDAKRLSKALRAVLRRHEIFRTGFAAVGNNADATSLAQIVFGRTKNKVQVIQVADRAGAEEGYRQLVQTQYDITAGDTLRLVDFFWGKDEHLFVVAYHRFVGDGSTTENIFVEASQLYGGVTLDKHVPQFADLATRQREALESGQMDADLAYWESMHHQPTGVVSPVLPRMLLGEDGLNSPNHARQPNSWKQHEAIARLDPMVAFRIRERSRKHKATPMQFYLAAYHVLLARLTGSSDFSIGLADTNRTNVDELAGMGFFANLLPLRFRNFVPHITFGEHLVATKDKVREAMQHARVPYGVLLERLGFEVPGATAETAEPAPLFQAVFDYKQGQAESGSIGSAKMTEVIATRERTPYDVVLEMSDDPTKDPLLTVKLQSSVYEVHHPRAFLESYISILSMFSMNPALKLA.

The Ketosynthase family 3 (KS3) domain occupies 49-488 (NEPIVVVGSG…GTNAHAIIEE (440 aa)). Active-site for beta-ketoacyl synthase activity residues include C222, H361, and H408. Residues 603–945 (VFTGQGAQWP…AYLWEQFGIP (343 aa)) are acyl and malonyl transferase. Residue S697 is the For malonyltransferase activity of the active site. An N-terminal hotdog fold region spans residues 997 to 1133 (HLLLGKLSEY…GQLVVTLDEG (137 aa)). The 315-residue stretch at 997 to 1311 (HLLLGKLSEY…FKPFSPPTAS (315 aa)) folds into the PKS/mFAS DH domain. Catalysis depends on H1029, which acts as the Proton acceptor; for dehydratase activity. The tract at residues 1029-1041 (HALQGQVVFPAAG) is dehydratase-like. The tract at residues 1156–1311 (MNRVNINSFY…FKPFSPPTAS (156 aa)) is C-terminal hotdog fold. D1218 serves as the catalytic Proton donor; for dehydratase activity. The methyltransferase stretch occupies residues 1556–1594 (YDLIIASNVLHATPDLEKTMAHARSLLKPGGQMVILEIT). A beta-ketoacyl reductase region spans residues 2176-2470 (ALPARIRPID…FKIPERRGKA (295 aa)). The 80-residue stretch at 2492–2571 (DQVRQIVIDG…DLADDAAARL (80 aa)) folds into the Carrier domain. Position 2531 is an O-(pantetheine 4'-phosphoryl)serine (S2531). A disordered region spans residues 2582–2624 (SEGGAETSDNDTSGPEGTDLSASTTITEPSSADEEDEKQEDDN). Residues 2591–2611 (NDTSGPEGTDLSASTTITEPS) show a composition bias toward polar residues. The span at 2612–2624 (SADEEDEKQEDDN) shows a compositional bias: acidic residues. The tract at residues 2633–2989 (PLSLGQEYAW…AETAEPAPLF (357 aa)) is peptide synthetase elongation.

It depends on pantetheine 4'-phosphate as a cofactor.

The catalysed reaction is holo-[lovastatin nonaketide synthase] + 9 malonyl-CoA + S-adenosyl-L-methionine + 11 NADPH + 19 H(+) = dihydromonacolin L-[lovastatin nonaketide synthase] + S-adenosyl-L-homocysteine + 9 CO2 + 11 NADP(+) + 9 CoA + 6 H2O. Its pathway is polyketide biosynthesis; lovastatin biosynthesis. Functionally, nonaketide synthase; part of the gene cluster that mediates the biosynthesis of monakolin K, also known as lovastatin, and which acts as a potent competitive inhibitor of HMG-CoA reductase. Monakolin K biosynthesis is performed in two stages. The first stage is catalyzed by the nonaketide synthase mokA, which belongs to type I polyketide synthases and catalyzes the iterative nine-step formation of the polyketide. This PKS stage is completed by the action of dehydrogenase mokE, which catalyzes the NADPH-dependent reduction of the unsaturated tetra-, penta- and heptaketide intermediates that arise during the mokA-mediated biosynthesis of the nonaketide chain and leads to dihydromonacolin L. Covalently bound dihydromonacolin L is released from mokA by the mokD esterase. Conversion of dihydromonacolin L into monacolin L and then monacolin J is subsequently performed with the participation of molecular oxygen and P450 monoogygenase mokC. Finally, mokF performs the conversion of monacoline J to monacoline K through the addition of the side-chain diketide moiety (2R)-2-methylbutanoate produced by the diketide synthase mokB. The chain is Lovastatin nonaketide synthase mokA from Monascus pilosus (Red mold).